Reading from the N-terminus, the 453-residue chain is Neuraminidase (453 aa).

At 1–6 (MNPNQK) the chain is on the intravirion side. Residues 7–27 (IITIGSICMVVGIISLILQIG) traverse the membrane as a helical segment. An involved in apical transport and lipid raft association region spans residues 11-33 (GSICMVVGIISLILQIGNIISIW). The Virion surface segment spans residues 28-453 (NIISIWISHS…GAELPFTIDK (426 aa)). Residues 36–74 (HSIQTGNQNHTGICNQGIITYNVVAGQDSTSVILTGNSS) are hypervariable stalk region. 2 N-linked (GlcNAc...) asparagine; by host glycosylation sites follow: N44 and N72. The head of neuraminidase stretch occupies residues 75–453 (LCPIRGWAIH…GAELPFTIDK (379 aa)). 8 disulfides stabilise this stretch: C76-C401, C108-C113, C168-C215, C217-C222, C263-C276, C265-C274, C302-C319, and C405-C430. R102 is a binding site for substrate. N130 carries N-linked (GlcNAc...) asparagine; by host glycosylation. D135 acts as the Proton donor/acceptor in catalysis. Residue R136 participates in substrate binding. N219 is a glycosylation site (N-linked (GlcNAc...) asparagine; by host). Substrate is bound at residue 261-262 (EE). A substrate-binding site is contributed by R277. Residues D278, G282, D308, and N328 each contribute to the Ca(2+) site. Residue R352 participates in substrate binding. Y386 (nucleophile) is an active-site residue.

This sequence belongs to the glycosyl hydrolase 34 family. As to quaternary structure, homotetramer. It depends on Ca(2+) as a cofactor. In terms of processing, N-glycosylated.

It localises to the virion membrane. It is found in the host apical cell membrane. It carries out the reaction Hydrolysis of alpha-(2-&gt;3)-, alpha-(2-&gt;6)-, alpha-(2-&gt;8)- glycosidic linkages of terminal sialic acid residues in oligosaccharides, glycoproteins, glycolipids, colominic acid and synthetic substrates.. With respect to regulation, inhibited by the neuraminidase inhibitors zanamivir (Relenza) and oseltamivir (Tamiflu). These drugs interfere with the release of progeny virus from infected cells and are effective against all influenza strains. Resistance to neuraminidase inhibitors is quite rare. Unlike other strains, A/WSN/33 neuraminidase binds and activates plasminogen into plasmin in the vicinity of HA so that activated plasmin cleaves HA rendering the virus infectious. Its function is as follows. Catalyzes the removal of terminal sialic acid residues from viral and cellular glycoconjugates. Cleaves off the terminal sialic acids on the glycosylated HA during virus budding to facilitate virus release. Additionally helps virus spread through the circulation by further removing sialic acids from the cell surface. These cleavages prevent self-aggregation and ensure the efficient spread of the progeny virus from cell to cell. Otherwise, infection would be limited to one round of replication. Described as a receptor-destroying enzyme because it cleaves a terminal sialic acid from the cellular receptors. May facilitate viral invasion of the upper airways by cleaving the sialic acid moieties on the mucin of the airway epithelial cells. Likely to plays a role in the budding process through its association with lipid rafts during intracellular transport. May additionally display a raft-association independent effect on budding. Plays a role in the determination of host range restriction on replication and virulence. Sialidase activity in late endosome/lysosome traffic seems to enhance virus replication. The chain is Neuraminidase from Influenza A virus (strain A/Wilson-Smith/1933 H1N1) (Influenza A virus (strain A/WS/1933 H1N1)).